Consider the following 706-residue polypeptide: Elongation factor G (706 aa).

The 277-residue stretch at 15 to 291 (LKTRNIGISA…GVLDYLASPV (277 aa)) folds into the tr-type G domain. GTP contacts are provided by residues 24–31 (AHIDSGKT), 91–95 (DTPGH), and 145–148 (NKLD).

This sequence belongs to the TRAFAC class translation factor GTPase superfamily. Classic translation factor GTPase family. EF-G/EF-2 subfamily.

It is found in the cytoplasm. Its function is as follows. Catalyzes the GTP-dependent ribosomal translocation step during translation elongation. During this step, the ribosome changes from the pre-translocational (PRE) to the post-translocational (POST) state as the newly formed A-site-bound peptidyl-tRNA and P-site-bound deacylated tRNA move to the P and E sites, respectively. Catalyzes the coordinated movement of the two tRNA molecules, the mRNA and conformational changes in the ribosome. The polypeptide is Elongation factor G (Leptospira borgpetersenii serovar Hardjo-bovis (strain JB197)).